The chain runs to 452 residues: Gastrin/cholecystokinin type B receptor (452 aa).

The Extracellular segment spans residues 1–57 (MELLKLNRSLPGPGPGAALCRPEGPLLNGSGAGNLSCEPPRIRGAGTRELELAVRIT). 3 N-linked (GlcNAc...) asparagine glycosylation sites follow: Asn7, Asn28, and Asn34. A helical transmembrane segment spans residues 58-78 (LYAAIFLMSVAGNVLIIVVLG). The Cytoplasmic portion of the chain corresponds to 79–99 (LSRRLRTVTNAFLLSLAVSDL). Residues 100 to 120 (LLAVACMPFTLLPNLMGTFIF) traverse the membrane as a helical segment. At 121-127 (GTVVCKA) the chain is on the extracellular side. A disulfide bridge links Cys125 with Cys203. Residues 128–148 (VSYFMGVSVSVSTLSLVAIAL) form a helical membrane-spanning segment. The Cytoplasmic portion of the chain corresponds to 149–171 (ERYSAICRPLQARVWQTRSHAAR). The helical transmembrane segment at 172-192 (VIVATWMLSGLLMVPYPVYTA) threads the bilayer. Topologically, residues 193 to 218 (VQPAGPRVLQCMHRWPSARIRQTWSV) are extracellular. The chain crosses the membrane as a helical span at residues 219-239 (LLLLLLFFVPGVVMAVAYGLI). At 240–339 (SRELYLGLRF…LLAKKRVVRM (100 aa)) the chain is on the cytoplasmic side. The disordered stretch occupies residues 256–285 (ESQSQVGSQGGLPGGAGQGPAHPNGHCRSE). Positions 263–273 (SQGGLPGGAGQ) are enriched in gly residues. Residues 340–360 (LLVIVVLFFLCWLPVYSANTW) form a helical membrane-spanning segment. At 361–376 (RAFDGPGAHRALSGAP) the chain is on the extracellular side. Residues 377 to 397 (ISFIHLLSYASACVNPLVYCF) traverse the membrane as a helical segment. Residues 398–452 (MHRRFRQACLDTCARCCPRPPRARPRPLPDEDPPTPSIASLSRLSYTTISTLGPG) lie on the Cytoplasmic side of the membrane. Cys413 is lipidated: S-palmitoyl cysteine.

Belongs to the G-protein coupled receptor 1 family.

It localises to the cell membrane. Its function is as follows. Receptor for gastrin and cholecystokinin. The CCK-B receptors occur throughout the central nervous system where they modulate anxiety, analgesia, arousal, and neuroleptic activity. This receptor mediates its action by association with G proteins that activate a phosphatidylinositol-calcium second messenger system. The sequence is that of Gastrin/cholecystokinin type B receptor from Sus scrofa (Pig).